Reading from the N-terminus, the 163-residue chain is Small ribosomal subunit protein bS18c (163 aa).

Disordered regions lie at residues methionine 1–glycine 52 and asparagine 144–cysteine 163. The span at proline 7 to arginine 48 shows a compositional bias: basic residues.

Belongs to the bacterial ribosomal protein bS18 family. As to quaternary structure, part of the 30S ribosomal subunit.

The protein resides in the plastid. Its subcellular location is the chloroplast. The protein is Small ribosomal subunit protein bS18c of Sorghum bicolor (Sorghum).